The following is a 262-amino-acid chain: Phosphonates import ATP-binding protein PhnC (262 aa).

The 249-residue stretch at Ile-5 to Asn-253 folds into the ABC transporter domain. Residue Gly-37 to Ser-44 coordinates ATP.

Belongs to the ABC transporter superfamily. Phosphonates importer (TC 3.A.1.9.1) family. In terms of assembly, the complex is composed of two ATP-binding proteins (PhnC), two transmembrane proteins (PhnE) and a solute-binding protein (PhnD).

It is found in the cell inner membrane. The enzyme catalyses phosphonate(out) + ATP + H2O = phosphonate(in) + ADP + phosphate + H(+). Part of the ABC transporter complex PhnCDE involved in phosphonates import. Responsible for energy coupling to the transport system. This Shigella sonnei (strain Ss046) protein is Phosphonates import ATP-binding protein PhnC.